We begin with the raw amino-acid sequence, 94 residues long: Probable Fe(2+)-trafficking protein (94 aa).

Belongs to the Fe(2+)-trafficking protein family.

Functionally, could be a mediator in iron transactions between iron acquisition and iron-requiring processes, such as synthesis and/or repair of Fe-S clusters in biosynthetic enzymes. This chain is Probable Fe(2+)-trafficking protein, found in Alcanivorax borkumensis (strain ATCC 700651 / DSM 11573 / NCIMB 13689 / SK2).